Consider the following 188-residue polypeptide: HTH-type transcriptional regulator QacR (188 aa).

Residues Met1–Trp61 form the HTH tetR-type domain. Residues Thr24 to Phe43 constitute a DNA-binding region (H-T-H motif).

As to quaternary structure, homodimer. Binds cooperatively to DNA as a pair of dimers.

In terms of biological role, transcriptional repressor of qacA. Binds to IR1, an unusually long 28 bp operator, which is located downstream from the qacA promoter and overlaps its transcription start site. QacR is induced from its IR1 site by binding to one of many structurally dissimilar cationic lipophilic compounds, which are also substrates of QacA. The sequence is that of HTH-type transcriptional regulator QacR (qacR) from Staphylococcus aureus (strain Mu50 / ATCC 700699).